Reading from the N-terminus, the 191-residue chain is Probable GTP-binding protein EngB (191 aa).

Positions Asp-22–Glu-191 constitute an EngB-type G domain. GTP is bound by residues Gly-30–Ser-37, Gly-57–Thr-61, Asp-75–Gly-78, Thr-142–Asp-145, and Thr-172–Ser-174. Residues Ser-37 and Thr-59 each coordinate Mg(2+).

Belongs to the TRAFAC class TrmE-Era-EngA-EngB-Septin-like GTPase superfamily. EngB GTPase family. It depends on Mg(2+) as a cofactor.

Necessary for normal cell division and for the maintenance of normal septation. This is Probable GTP-binding protein EngB from Acholeplasma laidlawii (strain PG-8A).